Reading from the N-terminus, the 369-residue chain is Chorismate synthase (369 aa).

2 residues coordinate NADP(+): Arg48 and Arg54. FMN-binding positions include 125-127, 238-239, Gly278, 293-297, and Arg319; these read RSS, NA, and KPTSS.

It belongs to the chorismate synthase family. Homotetramer. The cofactor is FMNH2.

The catalysed reaction is 5-O-(1-carboxyvinyl)-3-phosphoshikimate = chorismate + phosphate. It participates in metabolic intermediate biosynthesis; chorismate biosynthesis; chorismate from D-erythrose 4-phosphate and phosphoenolpyruvate: step 7/7. Its function is as follows. Catalyzes the anti-1,4-elimination of the C-3 phosphate and the C-6 proR hydrogen from 5-enolpyruvylshikimate-3-phosphate (EPSP) to yield chorismate, which is the branch point compound that serves as the starting substrate for the three terminal pathways of aromatic amino acid biosynthesis. This reaction introduces a second double bond into the aromatic ring system. The chain is Chorismate synthase from Burkholderia thailandensis (strain ATCC 700388 / DSM 13276 / CCUG 48851 / CIP 106301 / E264).